Here is a 484-residue protein sequence, read N- to C-terminus: Threonine synthase-like 2 (484 aa).

Lysine 113 carries the N6-(pyridoxal phosphate)lysine modification.

It belongs to the threonine synthase family. Pyridoxal 5'-phosphate serves as cofactor.

Its function is as follows. Acts as a catabolic phospho-lyase on both gamma- and beta-phosphorylated substrates. Degrades O-phospho-threonine (PThr) to alpha-ketobutyrate, ammonia and phosphate. The polypeptide is Threonine synthase-like 2 (THNSL2) (Pongo abelii (Sumatran orangutan)).